The primary structure comprises 49 residues: Large ribosomal subunit protein uL16 (49 aa).

This sequence belongs to the universal ribosomal protein uL16 family. Part of the 50S ribosomal subunit.

Functionally, binds 23S rRNA and is also seen to make contacts with the A and possibly P site tRNAs. In Aquifex pyrophilus, this protein is Large ribosomal subunit protein uL16 (rplP).